The primary structure comprises 277 residues: Large ribosomal subunit protein uL2 (277 aa).

Disordered stretches follow at residues 1–20, 27–55, and 207–277; these read MGIRTFRPYTPGTRQASVSD, TQPEKSLTTYKHSSQGRNNRGVVTSRHRG, and KAGR…RNQS. A compositionally biased stretch (polar residues) spans 27–48; sequence TQPEKSLTTYKHSSQGRNNRGV. Composition is skewed to basic residues over residues 207-220 and 259-277; these read KAGRSRHRGKRPHV and TRNRKKASSKLIIRRRNQS.

Belongs to the universal ribosomal protein uL2 family. As to quaternary structure, part of the 50S ribosomal subunit. Forms a bridge to the 30S subunit in the 70S ribosome.

Its function is as follows. One of the primary rRNA binding proteins. Required for association of the 30S and 50S subunits to form the 70S ribosome, for tRNA binding and peptide bond formation. It has been suggested to have peptidyltransferase activity; this is somewhat controversial. Makes several contacts with the 16S rRNA in the 70S ribosome. This Gloeothece citriformis (strain PCC 7424) (Cyanothece sp. (strain PCC 7424)) protein is Large ribosomal subunit protein uL2.